The sequence spans 142 residues: Large ribosomal subunit protein bL17 (142 aa).

This sequence belongs to the bacterial ribosomal protein bL17 family. In terms of assembly, part of the 50S ribosomal subunit. Contacts protein L32.

The protein is Large ribosomal subunit protein bL17 of Chlamydia felis (strain Fe/C-56) (Chlamydophila felis).